The following is a 154-amino-acid chain: Endoribonuclease YbeY (154 aa).

Zn(2+) is bound by residues H120, H124, and H130.

It belongs to the endoribonuclease YbeY family. The cofactor is Zn(2+).

It localises to the cytoplasm. Functionally, single strand-specific metallo-endoribonuclease involved in late-stage 70S ribosome quality control and in maturation of the 3' terminus of the 16S rRNA. The polypeptide is Endoribonuclease YbeY (Oceanobacillus iheyensis (strain DSM 14371 / CIP 107618 / JCM 11309 / KCTC 3954 / HTE831)).